We begin with the raw amino-acid sequence, 211 residues long: Arginine exporter protein ArgO (211 aa).

Over 1 to 38 the chain is Cytoplasmic; sequence MFSYYFQGLALGAAMILPLGPQNAFVMNQGIRRQYHIM. A helical membrane pass occupies residues 39-58; that stretch reads IALLCAISDLVLICAGIFGG. Topologically, residues 59 to 63 are periplasmic; the sequence is SALLM. A helical transmembrane segment spans residues 64-91; the sequence is QSPWLLALVTWGGVAFLLWYGFGAFKTA. Over 92-102 the chain is Cytoplasmic; the sequence is MSSNIELASAE. A helical membrane pass occupies residues 103-130; sequence VMKQGRWKIIATMLAVTWLNPHVYLDTF. Residues 131–140 are Periplasmic-facing; sequence VVLGSLGGQL. A helical membrane pass occupies residues 141–170; that stretch reads DVEPKRWFALGTISASFLWFFGLALLAAWL. The Cytoplasmic portion of the chain corresponds to 171–173; the sequence is APR. The chain crosses the membrane as a helical span at residues 174-200; the sequence is LRTAKAQRIINLVVGCVMWFIALQLAR. The Periplasmic segment spans residues 201-211; it reads DGIAHAQALFS.

It belongs to the LysE/ArgO transporter (TC 2.A.75) family. Monomer.

Its subcellular location is the cell inner membrane. The enzyme catalyses L-arginine(in) = L-arginine(out). Involved in the export of arginine. Important to control the intracellular level of arginine and the correct balance between arginine and lysine. May also be involved in the export of canavanine (a plant-derived antimetabolite). This is Arginine exporter protein ArgO from Escherichia coli (strain K12).